Reading from the N-terminus, the 545-residue chain is Chaperonin GroEL 2 (545 aa).

ATP is bound by residues 30–33, K51, 87–91, G415, and D494; these read TLGP and DGTTT. The interval 526-545 is disordered; sequence EKGAGMPGMPPGGGYPGMGM. The span at 536 to 545 shows a compositional bias: gly residues; it reads PGGGYPGMGM.

It belongs to the chaperonin (HSP60) family. In terms of assembly, forms a cylinder of 14 subunits composed of two heptameric rings stacked back-to-back. Interacts with the co-chaperonin GroES.

Its subcellular location is the cytoplasm. The enzyme catalyses ATP + H2O + a folded polypeptide = ADP + phosphate + an unfolded polypeptide.. Its function is as follows. Together with its co-chaperonin GroES, plays an essential role in assisting protein folding. The GroEL-GroES system forms a nano-cage that allows encapsulation of the non-native substrate proteins and provides a physical environment optimized to promote and accelerate protein folding. The polypeptide is Chaperonin GroEL 2 (Syntrophus aciditrophicus (strain SB)).